A 101-amino-acid polypeptide reads, in one-letter code: Cell cycle protein GpsB (101 aa).

Positions 34–71 (LDMVIKDYETFNQEIEKLQQENLHLSKQLEEAVEQGKR) form a coiled coil.

Belongs to the GpsB family. As to quaternary structure, forms polymers through the coiled coil domains. Interacts with PBP1, MreC and EzrA.

It localises to the cytoplasm. Its function is as follows. Divisome component that associates with the complex late in its assembly, after the Z-ring is formed, and is dependent on DivIC and PBP2B for its recruitment to the divisome. Together with EzrA, is a key component of the system that regulates PBP1 localization during cell cycle progression. Its main role could be the removal of PBP1 from the cell pole after pole maturation is completed. Also contributes to the recruitment of PBP1 to the division complex. Not essential for septum formation. This is Cell cycle protein GpsB from Bacillus pumilus (strain SAFR-032).